We begin with the raw amino-acid sequence, 415 residues long: Esterase FrsA (415 aa).

The segment at 1-23 is disordered; the sequence is MANRNLSESLFKPRQKHQETSTL.

Belongs to the FrsA family.

It catalyses the reaction a carboxylic ester + H2O = an alcohol + a carboxylate + H(+). Its function is as follows. Catalyzes the hydrolysis of esters. The sequence is that of Esterase FrsA from Photorhabdus laumondii subsp. laumondii (strain DSM 15139 / CIP 105565 / TT01) (Photorhabdus luminescens subsp. laumondii).